Reading from the N-terminus, the 205-residue chain is Thymidylate kinase (205 aa).

ATP is bound at residue 9–16 (GPEGSGKT).

It belongs to the thymidylate kinase family.

The catalysed reaction is dTMP + ATP = dTDP + ADP. Functionally, phosphorylation of dTMP to form dTDP in both de novo and salvage pathways of dTTP synthesis. The protein is Thymidylate kinase of Staphylococcus aureus (strain NCTC 8325 / PS 47).